A 259-amino-acid chain; its full sequence is uncharacterized protein (259 aa).

In terms of domain architecture, ABC transporter spans 4-248 (LQTTNLSKTY…SILDTLSVLG (245 aa)). Residue 42–49 (GPSGSGKT) coordinates ATP.

This sequence belongs to the ABC transporter superfamily.

This is an uncharacterized protein from Bacillus subtilis (strain 168).